The sequence spans 77 residues: U8-hexatoxin-Mg1a (77 aa).

The signal sequence occupies residues methionine 1–alanine 22. Residues tyrosine 23–arginine 43 constitute a propeptide that is removed on maturation. Intrachain disulfides connect cysteine 46–cysteine 60, cysteine 53–cysteine 65, and cysteine 59–cysteine 76.

Expressed by the venom gland.

It localises to the secreted. Its function is as follows. Intrathorax injection into crickets causes paralysis prolonged for more than 60 minutes, followed by recovery. This chain is U8-hexatoxin-Mg1a, found in Macrothele gigas (Japanese funnel web spider).